Reading from the N-terminus, the 424-residue chain is UPF0597 protein Shewmr7_2876 (424 aa).

This sequence belongs to the UPF0597 family.

The sequence is that of UPF0597 protein Shewmr7_2876 from Shewanella sp. (strain MR-7).